Here is a 204-residue protein sequence, read N- to C-terminus: Casparian strip membrane protein 2 (204 aa).

The Cytoplasmic portion of the chain corresponds to 1–42 (MKNESTFIDVPAESSSAMKGKAPLIGVARDHTTSGSGGYNRG). The helical transmembrane segment at 43–63 (LAIFDFLLRLAAIVAALAAAA) threads the bilayer. The Extracellular portion of the chain corresponds to 64–92 (TMGTSDETLPFFTQFLQFEASYDDLPTFQ). Residues 93–113 (FFVIAMALVGGYLVLSLPISV) form a helical membrane-spanning segment. The Cytoplasmic portion of the chain corresponds to 114-125 (VTILRPLATAPR). Residues 126–146 (LLLLVLDTGVLALNTAAASSA) form a helical membrane-spanning segment. At 147-178 (AAISYLAHSGNQNTNWLPICQQFGDFCQKSSG) the chain is on the extracellular side. A helical membrane pass occupies residues 179-199 (AVVSAFVSVVFFTILVVISGV). Residues 200-204 (ALKRH) are Cytoplasmic-facing.

Belongs to the Casparian strip membrane proteins (CASP) family. Homodimer and heterodimers with other CASP proteins. Interacts with CASP1, CASP3 and CASP4.

It localises to the cell membrane. Functionally, regulates membrane-cell wall junctions and localized cell wall deposition. Required for establishment of the Casparian strip membrane domain (CSD) and the subsequent formation of Casparian strips, a cell wall modification of the root endodermis that determines an apoplastic barrier between the intraorganismal apoplasm and the extraorganismal apoplasm and prevents lateral diffusion. This chain is Casparian strip membrane protein 2 (CASP2), found in Arabidopsis thaliana (Mouse-ear cress).